Consider the following 507-residue polypeptide: Lysine--tRNA ligase (507 aa).

The Mg(2+) site is built by glutamate 406 and glutamate 413.

The protein belongs to the class-II aminoacyl-tRNA synthetase family. Homodimer. The cofactor is Mg(2+).

Its subcellular location is the cytoplasm. The catalysed reaction is tRNA(Lys) + L-lysine + ATP = L-lysyl-tRNA(Lys) + AMP + diphosphate. This is Lysine--tRNA ligase from Wolinella succinogenes (strain ATCC 29543 / DSM 1740 / CCUG 13145 / JCM 31913 / LMG 7466 / NCTC 11488 / FDC 602W) (Vibrio succinogenes).